We begin with the raw amino-acid sequence, 164 residues long: Transcriptional repressor NrdR (164 aa).

A zinc finger lies at C3 to C34. The region spanning L49–E139 is the ATP-cone domain.

This sequence belongs to the NrdR family. It depends on Zn(2+) as a cofactor.

Negatively regulates transcription of bacterial ribonucleotide reductase nrd genes and operons by binding to NrdR-boxes. The sequence is that of Transcriptional repressor NrdR from Streptococcus equi subsp. zooepidemicus (strain H70).